Consider the following 193-residue polypeptide: MAAIRKKLVIVGDGACGKTCLLIVFSKDQFPEVYVPTVFENYIADIEVDGKQVELALWDTAGQEDYDRLRPLSYPDTDVILMCFSIDSPDSLENIPEKWTPEVKHFCPNVPIILVGNKKDLRQDEHTRRELAKMKQEPVRSEEGRDMANRISAFGYLECSAKTKEGVREVFEMATRAGLQVRKNKRRRGCPIL.

12–19 provides a ligand contact to GTP; the sequence is GDGACGKT. The Effector region signature appears at 34 to 42; the sequence is YVPTVFENY. Residues 59–63 and 117–120 each bind GTP; these read DTAGQ and NKKD. The residue at position 190 (C190) is a Cysteine methyl ester. A lipid anchor (S-geranylgeranyl cysteine) is attached at C190. Residues 191-193 constitute a propeptide, removed in mature form; the sequence is PIL.

Belongs to the small GTPase superfamily. Rho family. In terms of assembly, interacts with RTKN. Interacts with AKAP13. Interacts with DIAPH1. Interacts with PKN2. Interacts with ROCK1 and ROCK2. Interacts with ARHGDIA. Interacts with RIPOR1.

It localises to the cell membrane. It is found in the cleavage furrow. Regulates a signal transduction pathway linking plasma membrane receptors to the assembly of focal adhesions and actin stress fibers. Serves as a microtubule-dependent signal that is required for the myosin contractile ring formation during cell cycle cytokinesis. Regulates apical junction formation in bronchial epithelial cells. The protein is Rho-related GTP-binding protein RhoC (RHOC) of Bos taurus (Bovine).